Consider the following 77-residue polypeptide: Acyl carrier protein (77 aa).

The 76-residue stretch at 2–77 (SDIAARVKKI…DATKFISEAQ (76 aa)) folds into the Carrier domain. S37 is subject to O-(pantetheine 4'-phosphoryl)serine.

It belongs to the acyl carrier protein (ACP) family. 4'-phosphopantetheine is transferred from CoA to a specific serine of apo-ACP by AcpS. This modification is essential for activity because fatty acids are bound in thioester linkage to the sulfhydryl of the prosthetic group.

It is found in the cytoplasm. Its pathway is lipid metabolism; fatty acid biosynthesis. Functionally, carrier of the growing fatty acid chain in fatty acid biosynthesis. The sequence is that of Acyl carrier protein from Jannaschia sp. (strain CCS1).